Here is a 709-residue protein sequence, read N- to C-terminus: Cell adhesion molecule CEACAM3 (709 aa).

The first 34 residues, 1 to 34 (MELSSVLPCKRCTPWRGLLLTASLLTCWLLPTTA), serve as a signal peptide directing secretion. Ig-like V-type domains follow at residues 35–142 (QVSI…HVYF), 155–262 (QLSI…QVDT), 275–382 (QLTV…QVNT), 393–500 (LLTI…SVHT), and 509–616 (QLVI…HIYK). N73, N86, N103, N110, N133, N207, N224, N231, N327, N344, N351, N381, N462, N561, N578, and N585 each carry an N-linked (GlcNAc...) asparagine glycan. One can recognise an Ig-like C2-type domain in the interval 631 to 695 (RVKSSVVLTC…YRCEVSNPVS (65 aa)).

The protein belongs to the immunoglobulin superfamily. CEA family. In terms of tissue distribution, expression detected only in placenta.

Its function is as follows. Possibly involved in cell adhesion. The sequence is that of Cell adhesion molecule CEACAM3 from Rattus norvegicus (Rat).